The primary structure comprises 724 residues: NAD(+) hydrolase SARM1 (724 aa).

A mitochondrion-targeting transit peptide spans 1 to 27 (MVLTLLFSAYKLCRFFTMSGPRPGADR). The interval 24-56 (GADRLTVPGPDRSGGASPWWAAGGRGSREVSPG) is disordered. Low complexity predominate over residues 36–45 (SGGASPWWAA). One copy of the ARM 1 repeat lies at 60–100 (EVQGALERSLPELQQALSELKQASAARAVGAGLAEVFQLVE). NAD(+) contacts are provided by residues Trp103, Arg110, 149–157 (EQILVAENR), and 190–193 (HMFK). ARM repeat units follow at residues 114–153 (QGLCDAIRLDGGLDLLLRLLQAPELETRVQAARLLEQILV), 155–193 (ENRDRVARIGLGVILNLAKEREPVELARSVAGILEHMFK), 196–235 (EETCQRLVAAGGLDAVLYWCRRTDPALLRHCALALANCAL), 237–280 (GGQT…LATN), 281–314 (KEVEREVEHSGTLALVEPLVASLDPGRFARCLVD), 315–354 (ASDTSQGRGPDDLQSLVLLLDSSRLEAQCIGAFYLCAEAA), and 359–402 (QGKT…EEVP). SAM domains follow at residues 412–476 (WKEA…LKTF) and 486–548 (NLAD…MLHS). A phosphoserine mark is found at Ser548 and Ser558. The region spanning 560–703 (DTPDVFISYR…KIIRFLQGRP (144 aa)) is the TIR domain. NAD(+)-binding positions include 569–570 (RR) and Glu599. Glu642 is a catalytic residue. Over residues 703-716 (PSQDSSAGSDTSLE) the composition is skewed to polar residues. Residues 703–724 (PSQDSSAGSDTSLEGATPMGLP) form a disordered region.

Belongs to the SARM1 family. In terms of assembly, homooctamer; forms an octameric ring via SAM domains. Interacts with TICAM1/TRIF and thereby interferes with TICAM1/TRIF function. Interacts with SDC2 (via cytoplasmic domain) and MAPK10/JNK3. Phosphorylation at Ser-548 by JNK kinases (MAPK8, MAPK9 and /or MAPK10) enhance the NAD(+) hydrolase (NADase) activity. Phosphorylation at Ser-548 and subsequent activation takes place in response to oxidative stress conditions and inhibits mitochondrial respiration. In terms of tissue distribution, widely expressed in the brain and neurons (at protein level). Expressed in photoreceptor cells of the neural retina.

The protein localises to the cytoplasm. Its subcellular location is the cell projection. It localises to the axon. The protein resides in the dendrite. It is found in the synapse. The protein localises to the mitochondrion. It carries out the reaction NAD(+) + H2O = ADP-D-ribose + nicotinamide + H(+). The catalysed reaction is NAD(+) = cyclic ADP-beta-D-ribose + nicotinamide + H(+). The enzyme catalyses NADP(+) + H2O = ADP-D-ribose 2'-phosphate + nicotinamide + H(+). Autoinhibited: in the inactive state, the enzymatic TIR domain is held apart by the autoinhibiting ARM repeats. NAD(+)-binding to ARM repeats maintains an inactive state by promoting interaction between ARM repeats and the TIR domain, thereby facilitating inhibition of the enzymatic TIR domain. Following activation, possibly by nicotinamide mononucleotide (NMN), auto-inhibitory interactions are released, allowing self-association of the TIR domains and subsequent activation of the NAD(+) hydrolase (NADase) activity. Self-association of TIR domains is facilitated by the octamer of SAM domains. Its function is as follows. NAD(+) hydrolase, which plays a key role in axonal degeneration following injury by regulating NAD(+) metabolism. Acts as a negative regulator of MYD88- and TRIF-dependent toll-like receptor signaling pathway by promoting Wallerian degeneration, an injury-induced form of programmed subcellular death which involves degeneration of an axon distal to the injury site. Wallerian degeneration is triggered by NAD(+) depletion: in response to injury, SARM1 is activated and catalyzes cleavage of NAD(+) into ADP-D-ribose (ADPR), cyclic ADPR (cADPR) and nicotinamide; NAD(+) cleavage promoting cytoskeletal degradation and axon destruction. Also able to hydrolyze NADP(+), but not other NAD(+)-related molecules. Can activate neuronal cell death in response to stress. Regulates dendritic arborization through the MAPK4-JNK pathway. Involved in innate immune response: inhibits both TICAM1/TRIF- and MYD88-dependent activation of JUN/AP-1, TRIF-dependent activation of NF-kappa-B and IRF3, and the phosphorylation of MAPK14/p38. This is NAD(+) hydrolase SARM1 from Mus musculus (Mouse).